A 155-amino-acid polypeptide reads, in one-letter code: DNA gyrase inhibitor (155 aa).

It belongs to the DNA gyrase inhibitor family. In terms of assembly, interacts with DNA gyrase.

It localises to the cytoplasm. Its function is as follows. Inhibits the supercoiling activity of DNA gyrase. Acts by inhibiting DNA gyrase at an early step, prior to (or at the step of) binding of DNA by the gyrase. It protects cells against toxins that target DNA gyrase, by inhibiting activity of these toxins and reducing the formation of lethal double-strand breaks in the cell. The sequence is that of DNA gyrase inhibitor from Edwardsiella piscicida.